The chain runs to 664 residues: Glycine--tRNA ligase beta subunit (664 aa).

It belongs to the class-II aminoacyl-tRNA synthetase family. Tetramer of two alpha and two beta subunits.

It is found in the cytoplasm. The enzyme catalyses tRNA(Gly) + glycine + ATP = glycyl-tRNA(Gly) + AMP + diphosphate. In Rickettsia felis (strain ATCC VR-1525 / URRWXCal2) (Rickettsia azadi), this protein is Glycine--tRNA ligase beta subunit.